A 122-amino-acid chain; its full sequence is Large ribosomal subunit protein uL14 (122 aa).

This sequence belongs to the universal ribosomal protein uL14 family. In terms of assembly, part of the 50S ribosomal subunit. Forms a cluster with proteins L3 and L19. In the 70S ribosome, L14 and L19 interact and together make contacts with the 16S rRNA in bridges B5 and B8.

Functionally, binds to 23S rRNA. Forms part of two intersubunit bridges in the 70S ribosome. This Corynebacterium kroppenstedtii (strain DSM 44385 / JCM 11950 / CIP 105744 / CCUG 35717) protein is Large ribosomal subunit protein uL14.